The primary structure comprises 999 residues: Translation initiation factor IF-2 (999 aa).

The disordered stretch occupies residues 50–407; sequence AFVNNTGSPA…RGQGQTVRLS (358 aa). Composition is skewed to pro residues over residues 60–89 and 96–121; these read PAAPPAATPPTPTPTPTPPRTPTPAPPPGG and PMPPRRPGAPTPGPKPKGPVPGPPQS. Residues 136-162 show a composition bias toward low complexity; that stretch reads VAAAEARAAALKAEQEAAVKAAQAARQ. Residues 163–173 show a composition bias toward basic and acidic residues; that stretch reads QQRDNVRREPP. The span at 179 to 194 shows a compositional bias: pro residues; sequence RPGPRPGPGAMPPRPG. Residues 213–222 show a composition bias toward low complexity; sequence GGRPPARGAG. Residues 244–266 are compositionally biased toward pro residues; that stretch reads RPSPASMPPRPSPASMPPRPSPA. Residues 275–367 show a composition bias toward gly residues; it reads RPGGPGSGRP…GAAGAFGRPG (93 aa). A compositionally biased stretch (basic residues) spans 371–380; that stretch reads TRGRKSKKQR. The span at 388 to 405 shows a compositional bias: polar residues; that stretch reads SAPTMSSGAPRGQGQTVR. One can recognise a tr-type G domain in the interval 490-662; it reads SRPPVVTVMG…VLLTADASLE (173 aa). A G1 region spans residues 499–506; the sequence is GHVDHGKT. 499–506 is a GTP binding site; sequence GHVDHGKT. The G2 stretch occupies residues 524 to 528; the sequence is GITQH. The G3 stretch occupies residues 549-552; the sequence is DTPG. GTP contacts are provided by residues 549 to 553 and 603 to 606; these read DTPGH and NKID. Residues 603–606 are G4; that stretch reads NKID. A G5 region spans residues 639 to 641; it reads AAK.

The protein belongs to the TRAFAC class translation factor GTPase superfamily. Classic translation factor GTPase family. IF-2 subfamily.

Its subcellular location is the cytoplasm. Its function is as follows. One of the essential components for the initiation of protein synthesis. Protects formylmethionyl-tRNA from spontaneous hydrolysis and promotes its binding to the 30S ribosomal subunits. Also involved in the hydrolysis of GTP during the formation of the 70S ribosomal complex. This Salinispora tropica (strain ATCC BAA-916 / DSM 44818 / JCM 13857 / NBRC 105044 / CNB-440) protein is Translation initiation factor IF-2.